Consider the following 366-residue polypeptide: Putative F-box protein At1g26515 (366 aa).

The tract at residues 1-20 is disordered; sequence MKTRSKKTKTENNQEKSKEK. Basic and acidic residues predominate over residues 8–20; it reads TKTENNQEKSKEK. The F-box domain maps to 20–66; it reads KNKFDQLPLDLEIEIFRRLPLKSVARFLTLSKSCAATIRSPSFITSF.

This is Putative F-box protein At1g26515 from Arabidopsis thaliana (Mouse-ear cress).